We begin with the raw amino-acid sequence, 386 residues long: Paralemmin-1 (386 aa).

The stretch at 4-115 forms a coiled coil; sequence VEANTLQQER…TKENLAEAAA (112 aa). Disordered stretches follow at residues 21-40, 51-149, 240-290, and 321-378; these read RKRQTEIENKRRQLEDDRRQ, ERWL…PMKA, EATA…TMIF, and DAES…AKKQ. 2 stretches are compositionally biased toward basic and acidic residues: residues 24–40 and 68–95; these read QTEIENKRRQLEDDRRQ and AMKKQMQEDEVKTKELEETIQRLERELE. Residues 97-116 are compositionally biased toward low complexity; the sequence is LENSSSVTSTKENLAEAAAP. Basic and acidic residues-rich tracts occupy residues 259–282, 322–334, and 365–377; these read PRREITGLQAKPRENSTEGAEPSR, AESKAEPEGKDHA, and EAKEAEPDMDAKK. Residues cysteine 380 and cysteine 382 are each lipidated (S-palmitoyl cysteine). Cysteine 383 carries the post-translational modification Cysteine methyl ester. Residue cysteine 383 is the site of S-farnesyl cysteine attachment. The propeptide at 384–386 is removed in mature form; the sequence is TVM.

Belongs to the paralemmin family. In terms of assembly, interacts with dopamine receptor DRD3. Phosphorylated. In terms of tissue distribution, expressed in the lens (at protein level). Highly expressed in forebrain and cerebellum with lower expression in adrenal gland and heart. Expression weak or undetectable in other tissues.

The protein resides in the cell membrane. It is found in the cell projection. Its subcellular location is the filopodium membrane. It localises to the axon. The protein localises to the dendrite. The protein resides in the dendritic spine. It is found in the basolateral cell membrane. Its subcellular location is the apicolateral cell membrane. Functionally, involved in plasma membrane dynamics and cell process formation. Isoform 1 and isoform 2 are necessary for axonal and dendritic filopodia induction, for dendritic spine maturation and synapse formation in a palmitoylation-dependent manner. In Gallus gallus (Chicken), this protein is Paralemmin-1 (PALM).